Reading from the N-terminus, the 563-residue chain is Testis-expressed basic protein 1 (563 aa).

A helical transmembrane segment spans residues 3–23; sequence VLEITLAVILTLLGLAILAIL. The tract at residues 56–81 is disordered; the sequence is GSRHAYSTQSDTSYDNRERSKRDYTP. Over residues 69–79 the composition is skewed to basic and acidic residues; the sequence is YDNRERSKRDY. The helical transmembrane segment at 99–119 threads the bilayer; sequence ELILLLMCFILALSRSSIGSI. A disordered region spans residues 311 to 563; it reads SEMSIPQGQG…GRKYNKKVEE (253 aa). Basic and acidic residues predominate over residues 367-383; the sequence is QVEKSEMGVPRRQESQV. A compositionally biased stretch (low complexity) spans 384–395; it reads KKSQSGVSKGQE. 2 stretches are compositionally biased toward basic and acidic residues: residues 412 to 447 and 485 to 544; these read QVEKSELKVPKGQEGQVEKTEADVPKEQEVQEKKSE and EAQE…EKSK.

The protein localises to the membrane. This chain is Testis-expressed basic protein 1, found in Homo sapiens (Human).